Reading from the N-terminus, the 137-residue chain is Hemoglobin subunit beta (137 aa).

The Globin domain maps to His3–His137. Residues His54 and His83 each contribute to the heme b site.

It belongs to the globin family. Heterotetramer of two alpha chains and two beta chains. As to expression, red blood cells.

In terms of biological role, involved in oxygen transport from gills to the various peripheral tissues. The protein is Hemoglobin subunit beta (HBB) of Mustelus griseus (Spotless smooth-hound).